A 184-amino-acid polypeptide reads, in one-letter code: Photosystem I assembly protein Ycf4 (184 aa).

2 helical membrane-spanning segments follow: residues 22-42 (FFWA…GTSS) and 57-77 (IIFF…LFIS).

This sequence belongs to the Ycf4 family.

Its subcellular location is the plastid. The protein localises to the chloroplast thylakoid membrane. Seems to be required for the assembly of the photosystem I complex. This chain is Photosystem I assembly protein Ycf4, found in Aethionema cordifolium (Lebanon stonecress).